The chain runs to 171 residues: MPLLDSFAVDHTRMQAPAVRVAKTMNTPHGDTITVFDLRFCVPNKEVMPEKGIHTLEHLFAGFMRDHLNGNGVEIIDISPMGCRTGFYMSLIGTPDEQRVADAWKAAMADVLKVQDQNQIPELNVYQCGTWQMHSLNEAQEIARHILDCDIRVNNNTELALPKEKLQELHI.

Positions 54, 58, and 128 each coordinate Fe cation.

This sequence belongs to the LuxS family. As to quaternary structure, homodimer. It depends on Fe cation as a cofactor.

It carries out the reaction S-(5-deoxy-D-ribos-5-yl)-L-homocysteine = (S)-4,5-dihydroxypentane-2,3-dione + L-homocysteine. In terms of biological role, involved in the synthesis of autoinducer 2 (AI-2) which is secreted by bacteria and is used to communicate both the cell density and the metabolic potential of the environment. The regulation of gene expression in response to changes in cell density is called quorum sensing. Catalyzes the transformation of S-ribosylhomocysteine (RHC) to homocysteine (HC) and 4,5-dihydroxy-2,3-pentadione (DPD). This Salmonella arizonae (strain ATCC BAA-731 / CDC346-86 / RSK2980) protein is S-ribosylhomocysteine lyase.